A 1273-amino-acid polypeptide reads, in one-letter code: MVSMLPKADAATGVIRKSYAQLPEVVNVPNLIEMQLQSFVWFQEEGLRELIEEISPIKDFVGNRLELEFIGYEFREPRLSEYECTQRDQTYSVPLYVKARLIVKTTGEIKEPFDLFFGDIPLMTALGTFITSGTERVVVSQLLRSPGVYFTISDDPATGRPLCHTNLIPSRGAWLEFETSNRDVISVKIDGRRKIPVSTLLRAIGYSDDLDILNLFEVIDNDPERHYIQSSIDRDPLIKDEISALIDIYSRLRPGDPPNADNARKLINEMFFDPQHYDLGKVGRYKVNRRLELPSREVGENRALTREDIVAIIQRIIMVNNGQDTPDDIDHLGNRRIRTVGELVQNQFRIGLVRLERVARERMSIVNLEMVTPSALVNIRPVVSAVKEFFGGSQLSQFMDQTNPLAEITNKRRLSAMGPGGLSRERAGFDVRDVHYSHYGRICPIETPEGPNIGLIGSLATYSRINRYGFVETPYRKVYSKLKNNDKKLVGLKLKIEISEKGKVLAAAGSTISEDSFKLISKLPECDISVMPFVSAEVKYMPADEEDRYIIAQANTRLDEKGYFLDDRIEARSAERYVVEPPDKIDYMDVSPKQIFSVAASLIPFLEHDDANRALMGANMQRQAVPLLRAEAPMVATGMEREAARYSGQVIFAKHAGVASSVTSEKIIIRTAEGGHDEYLLKKFVRTNQGTCINQHAIINKGQKIAAGQVLADSSATENGELALGQNCVVAFMSWQGFNYEDAIILSERLVREDAFTSIHITKHELEARDTKLGVEEITRDIPNVGEESLRELDEDGIIRIGAEVGPDDILVGKITPKGETELSAEEKLLRAIFGEKAREVKDTSLRMPHGEWGKVINVRIFSRDSGDDLPARVNKWVQVWVAQKRKVSVGDKLAGRHGNKGVISIIAPVEDMPYLPDGTPVDVVLNPIGVPSRMNLGQILETHLGWAGHLLGFRVATPVFDGADDTVIEDALARSWLSAKAGAIDMSPENKRPSADAHKAIEWIKQQGFDGKKIFDEKHPGLAKEVSLKLWLKDMGVDASALSGAELEKKAYDVSSQSRLPSPIVGKSVLRDGRTGETFDQPVTVGNMYILKLIHLVEDKVHARATGPYSLISQQPLGGKAQFGGQRFGEMEVWAMYAYGTAHNLQEMLTIKSDDIAGRAKAYESIVKGEDVLQPGVPESFKVLVKELQSLGLAVEVINEEVKIAPSEKVSSLNEGNLPASDEISAEILPETLYANTEDISEDSMMSVIDADDQDLVVSSNDEEVSENDERS.

The tract at residues 1252-1273 (ADDQDLVVSSNDEEVSENDERS) is disordered.

Belongs to the RNA polymerase beta chain family. As to quaternary structure, the RNAP catalytic core consists of 2 alpha, 1 beta, 1 beta' and 1 omega subunit. When a sigma factor is associated with the core the holoenzyme is formed, which can initiate transcription.

The catalysed reaction is RNA(n) + a ribonucleoside 5'-triphosphate = RNA(n+1) + diphosphate. In terms of biological role, DNA-dependent RNA polymerase catalyzes the transcription of DNA into RNA using the four ribonucleoside triphosphates as substrates. The protein is DNA-directed RNA polymerase subunit beta of Dehalococcoides mccartyi (strain CBDB1).